Reading from the N-terminus, the 542-residue chain is Peptide chain release factor 3 (542 aa).

A tr-type G domain is found at 11–279 (EKRRTFAIIS…AYVEYAPSPR (269 aa)). GTP is bound by residues 20 to 27 (SHPDAGKT), 88 to 92 (DTPGH), and 142 to 145 (NKLD).

It belongs to the TRAFAC class translation factor GTPase superfamily. Classic translation factor GTPase family. PrfC subfamily.

It localises to the cytoplasm. Its function is as follows. Increases the formation of ribosomal termination complexes and stimulates activities of RF-1 and RF-2. It binds guanine nucleotides and has strong preference for UGA stop codons. It may interact directly with the ribosome. The stimulation of RF-1 and RF-2 is significantly reduced by GTP and GDP, but not by GMP. The polypeptide is Peptide chain release factor 3 (Nitrosococcus oceani (strain ATCC 19707 / BCRC 17464 / JCM 30415 / NCIMB 11848 / C-107)).